A 306-amino-acid polypeptide reads, in one-letter code: Ribonuclease Z (306 aa).

Residues His62, His64, Asp66, His67, His138, Asp209, and His267 each coordinate Zn(2+). The active-site Proton acceptor is Asp66.

This sequence belongs to the RNase Z family. In terms of assembly, homodimer. Zn(2+) is required as a cofactor.

It catalyses the reaction Endonucleolytic cleavage of RNA, removing extra 3' nucleotides from tRNA precursor, generating 3' termini of tRNAs. A 3'-hydroxy group is left at the tRNA terminus and a 5'-phosphoryl group is left at the trailer molecule.. Zinc phosphodiesterase, which displays some tRNA 3'-processing endonuclease activity. Probably involved in tRNA maturation, by removing a 3'-trailer from precursor tRNA. The sequence is that of Ribonuclease Z from Archaeoglobus fulgidus (strain ATCC 49558 / DSM 4304 / JCM 9628 / NBRC 100126 / VC-16).